The chain runs to 124 residues: Small ribosomal subunit protein uS12 (124 aa).

Aspartate 89 is modified (3-methylthioaspartic acid). The segment at 105-124 is disordered; that stretch reads QGVKNRKQARSRYGAKKEKS. Basic residues predominate over residues 108–118; sequence KNRKQARSRYG.

This sequence belongs to the universal ribosomal protein uS12 family. In terms of assembly, part of the 30S ribosomal subunit. Contacts proteins S8 and S17. May interact with IF1 in the 30S initiation complex.

In terms of biological role, with S4 and S5 plays an important role in translational accuracy. Its function is as follows. Interacts with and stabilizes bases of the 16S rRNA that are involved in tRNA selection in the A site and with the mRNA backbone. Located at the interface of the 30S and 50S subunits, it traverses the body of the 30S subunit contacting proteins on the other side and probably holding the rRNA structure together. The combined cluster of proteins S8, S12 and S17 appears to hold together the shoulder and platform of the 30S subunit. The protein is Small ribosomal subunit protein uS12 of Mycobacterium leprae (strain Br4923).